Consider the following 831-residue polypeptide: Phenylalanine--tRNA ligase beta subunit (831 aa).

Positions 44-155 (GPVDGPVTVG…GAAEPGADGA (112 aa)) constitute a tRNA-binding domain. Residues 414–489 (WSPPPIRMGV…RLEGLEVIPS (76 aa)) form the B5 domain. Mg(2+) is bound by residues Asp467, Asp473, Glu476, and Glu477. The 94-residue stretch at 737-830 (SPYPAVFQDV…AAERVGAVLR (94 aa)) folds into the FDX-ACB domain.

The protein belongs to the phenylalanyl-tRNA synthetase beta subunit family. Type 1 subfamily. In terms of assembly, tetramer of two alpha and two beta subunits. Mg(2+) serves as cofactor.

It is found in the cytoplasm. The enzyme catalyses tRNA(Phe) + L-phenylalanine + ATP = L-phenylalanyl-tRNA(Phe) + AMP + diphosphate + H(+). This is Phenylalanine--tRNA ligase beta subunit from Mycobacterium bovis (strain ATCC BAA-935 / AF2122/97).